A 72-amino-acid polypeptide reads, in one-letter code: Translation initiation factor IF-1 (72 aa).

Positions 1–72 (MAKEEPIEVE…TRGRIIYRTK (72 aa)) constitute an S1-like domain.

The protein belongs to the IF-1 family. As to quaternary structure, component of the 30S ribosomal translation pre-initiation complex which assembles on the 30S ribosome in the order IF-2 and IF-3, IF-1 and N-formylmethionyl-tRNA(fMet); mRNA recruitment can occur at any time during PIC assembly.

It localises to the cytoplasm. One of the essential components for the initiation of protein synthesis. Stabilizes the binding of IF-2 and IF-3 on the 30S subunit to which N-formylmethionyl-tRNA(fMet) subsequently binds. Helps modulate mRNA selection, yielding the 30S pre-initiation complex (PIC). Upon addition of the 50S ribosomal subunit IF-1, IF-2 and IF-3 are released leaving the mature 70S translation initiation complex. The chain is Translation initiation factor IF-1 from Syntrophus aciditrophicus (strain SB).